A 116-amino-acid chain; its full sequence is Large ribosomal subunit protein uL23 (116 aa).

This sequence belongs to the universal ribosomal protein uL23 family. Part of the 50S ribosomal subunit. Contacts protein L29, and trigger factor when it is bound to the ribosome.

Its function is as follows. One of the early assembly proteins it binds 23S rRNA. One of the proteins that surrounds the polypeptide exit tunnel on the outside of the ribosome. Forms the main docking site for trigger factor binding to the ribosome. In Psychrobacter arcticus (strain DSM 17307 / VKM B-2377 / 273-4), this protein is Large ribosomal subunit protein uL23.